The following is a 342-amino-acid chain: Heat-inducible transcription repressor HrcA (342 aa).

It belongs to the HrcA family.

In terms of biological role, negative regulator of class I heat shock genes (grpE-dnaK-dnaJ and groELS operons). Prevents heat-shock induction of these operons. This Onion yellows phytoplasma (strain OY-M) protein is Heat-inducible transcription repressor HrcA.